The primary structure comprises 331 residues: UPF0324 membrane protein YdhF (331 aa).

8 helical membrane-spanning segments follow: residues 2–20, 24–46, 82–104, 114–136, 148–170, 204–226, 247–269, and 308–330; these read SILPGFLLSFAIAIVSYLL, IFHSLGSATIAILLGIILGNLYF, LGFSGVGFILIQMISTIIFVLFM, VSALMASGNAVCGSSAIAAVEPV, IAMVNLMGTILMLSLPFLGTWMF, TLATLFKIMRIIMLVFVVLYFGF, SFLPWYVLGFLVLCTLDTLIHFV, and LIYGLSTLVFQVVLALILISLLI.

The protein belongs to the UPF0324 family.

The protein resides in the cell membrane. The protein is UPF0324 membrane protein YdhF (ydhF) of Lactococcus lactis subsp. lactis (strain IL1403) (Streptococcus lactis).